The following is a 600-amino-acid chain: Putative heme-binding protein NP_2262A (600 aa).

Histidine 180 serves as a coordination point for heme. The tract at residues 261 to 289 (TSETGHGGADSQTSSESSGGRPSTDPSHD) is disordered. Over residues 270–285 (DSQTSSESSGGRPSTD) the composition is skewed to polar residues. The region spanning 510–598 (GTMGMFYTVK…VLADRPRHVF (89 aa)) is the ABM domain.

In the N-terminal section; belongs to the ChdC family.

The sequence is that of Putative heme-binding protein NP_2262A from Natronomonas pharaonis (strain ATCC 35678 / DSM 2160 / CIP 103997 / JCM 8858 / NBRC 14720 / NCIMB 2260 / Gabara) (Halobacterium pharaonis).